A 1161-amino-acid chain; its full sequence is DNA-directed RNA polymerase subunit beta (1161 aa).

The protein belongs to the RNA polymerase beta chain family. In terms of assembly, the RNAP catalytic core consists of 2 alpha, 1 beta, 1 beta' and 1 omega subunit. When a sigma factor is associated with the core the holoenzyme is formed, which can initiate transcription. The RNAP complex including the principal sigma factor HrdB also interacts with RNA-binding protein RbpA.

It carries out the reaction RNA(n) + a ribonucleoside 5'-triphosphate = RNA(n+1) + diphosphate. Its function is as follows. DNA-dependent RNA polymerase catalyzes the transcription of DNA into RNA using the four ribonucleoside triphosphates as substrates. This chain is DNA-directed RNA polymerase subunit beta, found in Streptomyces coelicolor (strain ATCC BAA-471 / A3(2) / M145).